The sequence spans 550 residues: Hydroxylamine reductase (550 aa).

Cysteine 3, cysteine 6, cysteine 18, and cysteine 25 together coordinate [2Fe-2S] cluster. Positions 249, 273, 317, 405, 433, 458, 492, and 494 each coordinate hybrid [4Fe-2O-2S] cluster. Cysteine 405 bears the Cysteine persulfide mark.

This sequence belongs to the HCP family. [2Fe-2S] cluster is required as a cofactor. Hybrid [4Fe-2O-2S] cluster serves as cofactor.

Its subcellular location is the cytoplasm. It carries out the reaction A + NH4(+) + H2O = hydroxylamine + AH2 + H(+). Catalyzes the reduction of hydroxylamine to form NH(3) and H(2)O. The sequence is that of Hydroxylamine reductase from Pectobacterium carotovorum subsp. carotovorum (strain PC1).